Consider the following 428-residue polypeptide: Oxysterol-binding protein 9 (428 aa).

Over residues 1–11 (MTEVQSITTSG) the composition is skewed to polar residues. 2 disordered regions span residues 1 to 32 (MTEV…STTN) and 396 to 428 (ALIE…KNQK). The segment covering 18 to 32 (SPSSSSSSISSSTTN) has biased composition (low complexity). Residues 389–422 (EEAKKYKALIEDNQRKQKKEKDEKLKKDEKLKKE) are a coiled coil.

Belongs to the OSBP family.

This Dictyostelium discoideum (Social amoeba) protein is Oxysterol-binding protein 9 (osbI).